Reading from the N-terminus, the 377-residue chain is Carboxynorspermidine/carboxyspermidine decarboxylase (377 aa).

The residue at position 41 (Lys41) is an N6-(pyridoxal phosphate)lysine. Positions 238 and 274 each coordinate substrate.

It belongs to the Orn/Lys/Arg decarboxylase class-II family. NspC subfamily. As to quaternary structure, homodimer. Requires pyridoxal 5'-phosphate as cofactor.

It is found in the cytoplasm. The catalysed reaction is carboxynorspermidine + H(+) = norspermidine + CO2. The enzyme catalyses carboxyspermidine + H(+) = spermidine + CO2. With respect to regulation, dithiothreitol greatly stimulates activity, maximum stimulation being at 5-20 mM dithiothreitol concentration. Fe(3+), Fe(2+) and Mn(2+) severely inhibit activity (88%, 82% and 50%, respectively), whereas Zn(2+) has a slightly inhibitory effect (23%) and Mg(2+), Ca(2+), Cu(2+) and Cu(+) have no effect. In terms of biological role, catalyzes the decarboxylation of carboxynorspermidine and carboxyspermidine. 2,3-diaminopropionic acid, 2,4-diaminobutyric acid, L-ornithine or L-lysine cannot serve as substrates. The chain is Carboxynorspermidine/carboxyspermidine decarboxylase from Vibrio alginolyticus.